The following is a 113-amino-acid chain: Retrotransposon Gag-like protein 8C (113 aa).

This sequence belongs to the FAM127 family.

The sequence is that of Retrotransposon Gag-like protein 8C from Homo sapiens (Human).